Reading from the N-terminus, the 59-residue chain is Single-pass membrane and coiled-coil domain-containing protein 4 (59 aa).

The tract at residues 1–23 (MRQLKGKPKKETSKDKKERKQAM) is disordered. Basic and acidic residues predominate over residues 9–22 (KKETSKDKKERKQA). The stretch at 9-31 (KKETSKDKKERKQAMQEARQQIT) forms a coiled coil. Residues 32-52 (TVVLPTLAVVVLLIVVFVYVA) traverse the membrane as a helical segment.

The protein belongs to the SMCO4 family.

It localises to the membrane. The sequence is that of Single-pass membrane and coiled-coil domain-containing protein 4 (SMCO4) from Homo sapiens (Human).